Consider the following 700-residue polypeptide: Choline transporter-like protein 5-B (700 aa).

Residues 1–4 (GCTD) lie on the Cytoplasmic side of the membrane. Residues 5-25 (VLCCVIFVIVILGYIVLGTVA) traverse the membrane as a helical segment. The Extracellular segment spans residues 26 to 209 (WMHGDPRKVV…KIFEDYASSW (184 aa)). Residues Asn157 and Asn164 are each glycosylated (N-linked (GlcNAc...) asparagine). The helical transmembrane segment at 210-230 (FWILIGLVISMLVSLVFILLL) threads the bilayer. The Cytoplasmic portion of the chain corresponds to 231 to 233 (RFT). Residues 234-254 (AGVLFWLVIFGVIAAVGYGIW) traverse the membrane as a helical segment. Residues 255–292 (HCYWEYSSLKGKPDSDVTISDIGFQTDFRVYLQLSQTW) are Extracellular-facing. Residues 293-313 (LIFMTSLAVIEAIIILVLIFL) form a helical membrane-spanning segment. The Cytoplasmic segment spans residues 314–341 (RNRVRIAIALLKEGSKAIGCIMSTLFYP). Residues 342-362 (IITFLLLALCIAYWAVTAVFL) form a helical membrane-spanning segment. The Extracellular segment spans residues 363-432 (ASSGEAVYKV…LQLCNLLVFL (70 aa)). 2 N-linked (GlcNAc...) asparagine glycosylation sites follow: Asn383 and Asn395. Residues 433 to 455 (WLVNFTIALGQCTLAGAFAAYYW) traverse the membrane as a helical segment. Residues 456-482 (ALRKPADIPPCPLASSFGRALRYHTGS) lie on the Cytoplasmic side of the membrane. Residues 483-503 (LAFGALILSIVQFIRIILEYL) traverse the membrane as a helical segment. At 504-541 (DHKLKGAHNAFTRFLLCCLKCCFWCLEHFIKFMNRNAY) the chain is on the extracellular side. A helical transmembrane segment spans residues 542-562 (IMISIYGKNFCTSARDAFFLL). Residues 563 to 577 (MRNVMRVAVLDKVTD) are Cytoplasmic-facing. The chain crosses the membrane as a helical span at residues 578-598 (FLLFLGKLLISGSVGVLAFFF). Topologically, residues 599–616 (FTRQIPVIQEEVPSLNYY) are extracellular. A helical membrane pass occupies residues 617–637 (WVPLLTVIFGSYMIAHGFFNV). Residues 638 to 687 (YAMCVDTLFLCFLLDLEKNDGSATRPYYMCSSLRAILNKKNQKRPKETKR) are Cytoplasmic-facing. The interval 676 to 700 (KKNQKRPKETKRGRKQKKEQPKSRH) is disordered. Positions 677–692 (KNQKRPKETKRGRKQK) are enriched in basic residues.

This sequence belongs to the CTL (choline transporter-like) family.

It is found in the cell membrane. The enzyme catalyses choline(out) + n H(+)(in) = choline(in) + n H(+)(out). Functionally, choline/H+ antiporter. This is Choline transporter-like protein 5-B (slc44a5b) from Danio rerio (Zebrafish).